A 409-amino-acid polypeptide reads, in one-letter code: Elongation factor Tu, chloroplastic (409 aa).

One can recognise a tr-type G domain in the interval 10-214 (KPHVNIGTIG…NVDSYIPTPA (205 aa)). A G1 region spans residues 19 to 26 (GHVDHGKT). A GTP-binding site is contributed by 19-26 (GHVDHGKT). T26 provides a ligand contact to Mg(2+). Positions 60 to 64 (GITIN) are G2. Residues 81 to 84 (DCPG) are G3. Residues 81–85 (DCPGH) and 136–139 (NKED) each bind GTP. The G4 stretch occupies residues 136–139 (NKED). Residues 174–176 (SAL) form a G5 region.

Belongs to the TRAFAC class translation factor GTPase superfamily. Classic translation factor GTPase family. EF-Tu/EF-1A subfamily.

The protein localises to the plastid. It localises to the chloroplast. The catalysed reaction is GTP + H2O = GDP + phosphate + H(+). In terms of biological role, GTP hydrolase that promotes the GTP-dependent binding of aminoacyl-tRNA to the A-site of ribosomes during protein biosynthesis. The sequence is that of Elongation factor Tu, chloroplastic (tufA) from Ostreococcus tauri.